The sequence spans 311 residues: Formyltransferase/hydrolase complex subunit D (311 aa).

It belongs to the FTR family. As to quaternary structure, homotetramer. Octaheteromer. Part of the formyltransferase/hydrolase complex fhc; composed of FhcA, FhcB, FhcC and FhcD.

The protein localises to the cytoplasm. The catalysed reaction is N-formylmethanofuran + 5,6,7,8-tetrahydromethanopterin + H(+) = N(5)-formyl-5,6,7,8-tetrahydromethanopterin + methanofuran. It participates in one-carbon metabolism; formaldehyde degradation; formate from formaldehyde (H(4)MPT route): step 4/5. Its function is as follows. Involved in the transformation of 5-formyl tetrahydromethanopterin (5-formyl-H(4)MPT) to methanofuran (MFR) and formate via the intermediate formylmethanofuran (formyl-MFR). Catalyzes the transfer of a formyl group from 5-formyl-H(4)MPT to MFR to produce tetrahydromethanopterin (H(4)MPT) and formyl-MFR, which is then hydrolyzed to formate and MFR. This chain is Formyltransferase/hydrolase complex subunit D, found in Methylorubrum extorquens (strain ATCC 14718 / DSM 1338 / JCM 2805 / NCIMB 9133 / AM1) (Methylobacterium extorquens).